The sequence spans 58 residues: MATVKVTLIKSMTGRIPNHRLCIKGLGLRRIGHTVEVLDTPENRGMINKAYYMLRVEG.

It belongs to the universal ribosomal protein uL30 family. As to quaternary structure, part of the 50S ribosomal subunit.

The protein is Large ribosomal subunit protein uL30 of Pseudomonas savastanoi pv. phaseolicola (strain 1448A / Race 6) (Pseudomonas syringae pv. phaseolicola (strain 1448A / Race 6)).